A 331-amino-acid chain; its full sequence is L-lactate dehydrogenase A chain (331 aa).

Residues 29 to 57 (GMVG…MEDK) and Arg98 each bind NAD(+). Residues Arg105, Asn137, and Arg168 each contribute to the substrate site. Asn137 is a binding site for NAD(+). The active-site Proton acceptor is the His192. Substrate is bound at residue Thr247.

It belongs to the LDH/MDH superfamily. LDH family. In terms of assembly, homotetramer.

It localises to the cytoplasm. It catalyses the reaction (S)-lactate + NAD(+) = pyruvate + NADH + H(+). Its pathway is fermentation; pyruvate fermentation to lactate; (S)-lactate from pyruvate: step 1/1. Functionally, interconverts simultaneously and stereospecifically pyruvate and lactate with concomitant interconversion of NADH and NAD(+). The sequence is that of L-lactate dehydrogenase A chain (ldha) from Chaenocephalus aceratus (Blackfin icefish).